The sequence spans 103 residues: Preprofallaxidin-6 (103 aa).

The first 22 residues, 1 to 22 (MASLKKSLFLVLFLGFVSLSIC), serve as a signal peptide directing secretion. A propeptide spanning residues 23-49 (EEEKRENEGNENEEEDENHEEGSEEKR) is cleaved from the precursor. Positions 24 to 50 (EEKRENEGNENEEEDENHEEGSEEKRG) are disordered. The segment covering 31 to 41 (GNENEEEDENH) has biased composition (acidic residues). A Leucine amide modification is found at L65. The interval 67–103 (KRSEEKRYHPFGKRSEEKRYHPFGKRSEEKRYPPIGK) is disordered. Residues 69-73 (SEEKR) constitute a propeptide that is removed on maturation. The residue at position 77 (F77) is a Phenylalanine amide. The propeptide occupies 81–85 (SEEKR). At F89 the chain carries Phenylalanine amide. Residues 93 to 97 (SEEKR) constitute a propeptide that is removed on maturation. I101 carries the post-translational modification Isoleucine amide.

The protein belongs to the frog skin active peptide (FSAP) family. Brevinin subfamily. Expressed by the skin glands.

The protein resides in the secreted. Fallaxidin-1.3 shows no antibacterial activity against Gram-positive or Gram-negative bacteria. Does not inhibit the formation of NO by neuronal nitric oxide synthase. Has no effect on splenocyte proliferation or smooth muscle contraction. In terms of biological role, fallaxidin-1.4 shows no antibacterial activity against Gram-positive or Gram-negative bacteria. Does not inhibit the formation of NO by neuronal nitric oxide synthase. Has no effect on splenocyte proliferation or smooth muscle contraction. Functionally, fallaxidin-3.1 shows antibacterial activity against the Gram-positive bacteria E.faecalis (MIC=100 uM) and L.lactis (MIC=100 uM). No antibacterial activity against the Gram-positive bacteria B.cereus, L.innocua, M.luteus, S.epidermidis, S.uberis and S.aureus, or the Gram-negative bacteria E.cloacae and E.coli. The polypeptide is Preprofallaxidin-6 (Litoria fallax (Eastern dwarf tree frog)).